A 182-amino-acid polypeptide reads, in one-letter code: Peptidoglycan L,D-endopeptidase MepK (182 aa).

The segment at residues 1 to 30 (MDKFDANRRKLLALGGVALGAAILPTPAFA) is a signal peptide (tat-type signal). Zn(2+) is bound by residues His133, Asp140, and His173.

This sequence belongs to the peptidase M15 family. Requires Zn(2+) as cofactor. Predicted to be exported by the Tat system. The position of the signal peptide cleavage has not been experimentally proven.

It participates in cell wall biogenesis; cell wall polysaccharide biosynthesis. L,D-endopeptidase that cleaves meso-diaminopimelic acid (mDAP)-mDAP cross-links in peptidoglycan. It works in conjunction with other elongation-specific D,D-endopeptidases to make space for efficient incorporation of nascent peptidoglycan strands into the sacculus and thus enable cell wall expansion. This is Peptidoglycan L,D-endopeptidase MepK from Escherichia coli O157:H7.